The following is a 340-amino-acid chain: MYLIEPIRNGEYITDGAIALAMQVYVNQHIFLDEDILFPYYCDPKVEIGRFQNTAIEVNQDYIDKHSIQVVRRDTGGGAVYVDKGAVNMCCILEQDTSIYGDFQRFYQPAIKALHTLGATDVIQSGRNDLTLNGKKVSGAAMTLMNNRIYGGYSLLLDVNYEAMDKVLKPNRKKIASKGIKSVRARVGHLREALDEKYRDITIEEFKNLMVTQILGIDDIKEAKRYELTDADWEAIDELADKKYKNWDWNYGKSPKYEYNRSERLSSGTVDITISVEQNRIADCRIYGDFFGQGDIKDVEEALQGTKMTREDLMHQLKQLDIVYYFGNVTVESLVEMILS.

The BPL/LPL catalytic domain maps to 31-222; that stretch reads FLDEDILFPY…QILGIDDIKE (192 aa). ATP-binding positions include R73, 78–81, K136, and A140; that span reads GAVY. Position 136 (K136) interacts with (R)-lipoate. The stretch at 293-321 forms a coiled coil; it reads QGDIKDVEEALQGTKMTREDLMHQLKQLD.

This sequence belongs to the LplA family.

It carries out the reaction L-lysyl-[lipoyl-carrier protein] + (R)-lipoate + ATP = N(6)-[(R)-lipoyl]-L-lysyl-[lipoyl-carrier protein] + AMP + diphosphate + H(+). Its pathway is protein modification; protein lipoylation via exogenous pathway; protein N(6)-(lipoyl)lysine from lipoate: step 1/2. It participates in protein modification; protein lipoylation via exogenous pathway; protein N(6)-(lipoyl)lysine from lipoate: step 2/2. Functionally, catalyzes specifically the lipoylation of GcvH-L (SAV0324), likely via the ATP-dependent activation of lipoate to lipoyl-AMP and the transfer of the activated lipoyl onto the lipoyl domain of the target protein. Can also utilize lipoamide as substrate for GcvH-L modification. In Staphylococcus aureus (strain Mu50 / ATCC 700699), this protein is Lipoate--protein ligase 2.